The primary structure comprises 148 residues: Large-conductance mechanosensitive channel (148 aa).

2 helical membrane passes run 16–36 (VMDLAVGVIIGGAFSTIVNSI) and 89–109 (GSFITVLINFLILAFIIFLMV).

Belongs to the MscL family. Homopentamer.

It localises to the cell inner membrane. Functionally, channel that opens in response to stretch forces in the membrane lipid bilayer. May participate in the regulation of osmotic pressure changes within the cell. The protein is Large-conductance mechanosensitive channel of Paraburkholderia xenovorans (strain LB400).